Consider the following 144-residue polypeptide: Maximins 3/H9 type 2 (144 aa).

An N-terminal signal peptide occupies residues 1–18; sequence MNFKYIVAVSFLIASAYA. Propeptides lie at residues 19 to 43 and 74 to 123; these read RSVQ…REIR and TAEE…KEKR. Residue Ile-143 is modified to Isoleucine amide.

It belongs to the bombinin family. As to expression, expressed by the skin glands.

It localises to the secreted. In terms of biological role, maximin-3 shows antibacterial activity against both Gram-positive and Gram-negative bacteria. It also shows antimicrobial activity against the fungus C.albicans, but not against A.flavus nor P.uticale. It has little hemolytic activity. It possess a significant cytotoxicity against tumor cell lines. It possess a significant anti-HIV activity. It shows high spermicidal activity. Maximin-H9 shows antimicrobial activity against bacteria and against the fungus C.albicans. Shows strong hemolytic activity. This chain is Maximins 3/H9 type 2, found in Bombina maxima (Giant fire-bellied toad).